The sequence spans 236 residues: Phosphoribosylaminoimidazole-succinocarboxamide synthase (236 aa).

The protein belongs to the SAICAR synthetase family.

It carries out the reaction 5-amino-1-(5-phospho-D-ribosyl)imidazole-4-carboxylate + L-aspartate + ATP = (2S)-2-[5-amino-1-(5-phospho-beta-D-ribosyl)imidazole-4-carboxamido]succinate + ADP + phosphate + 2 H(+). It functions in the pathway purine metabolism; IMP biosynthesis via de novo pathway; 5-amino-1-(5-phospho-D-ribosyl)imidazole-4-carboxamide from 5-amino-1-(5-phospho-D-ribosyl)imidazole-4-carboxylate: step 1/2. The polypeptide is Phosphoribosylaminoimidazole-succinocarboxamide synthase (Campylobacter jejuni subsp. jejuni serotype O:6 (strain 81116 / NCTC 11828)).